The following is a 445-amino-acid chain: Adenylosuccinate synthetase (445 aa).

Residues 12-18 (GDEGKGK) and 40-42 (GHT) contribute to the GTP site. Catalysis depends on D13, which acts as the Proton acceptor. Mg(2+)-binding residues include D13 and G40. IMP-binding positions include 13–16 (DEGK), 38–41 (NAGH), T128, R142, Q223, T238, and R302. The Proton donor role is filled by H41. 298–304 (TTTGRKR) lines the substrate pocket. GTP-binding positions include R304, 330 to 332 (KLD), and 411 to 413 (SLG).

The protein belongs to the adenylosuccinate synthetase family. Homodimer. Mg(2+) is required as a cofactor.

The protein resides in the cytoplasm. The catalysed reaction is IMP + L-aspartate + GTP = N(6)-(1,2-dicarboxyethyl)-AMP + GDP + phosphate + 2 H(+). It functions in the pathway purine metabolism; AMP biosynthesis via de novo pathway; AMP from IMP: step 1/2. Its function is as follows. Plays an important role in the de novo pathway of purine nucleotide biosynthesis. Catalyzes the first committed step in the biosynthesis of AMP from IMP. This chain is Adenylosuccinate synthetase, found in Cyanothece sp. (strain PCC 7425 / ATCC 29141).